Here is a 153-residue protein sequence, read N- to C-terminus: Superoxide dismutase [Cu-Zn] (153 aa).

Cu cation contacts are provided by histidine 45, histidine 47, and histidine 62. Cysteine 56 and cysteine 145 are joined by a disulfide. Positions 62, 70, 79, and 82 each coordinate Zn(2+). Histidine 119 provides a ligand contact to Cu cation.

It belongs to the Cu-Zn superoxide dismutase family. Homodimer. Cu cation serves as cofactor. Zn(2+) is required as a cofactor.

It is found in the cytoplasm. The catalysed reaction is 2 superoxide + 2 H(+) = H2O2 + O2. Its function is as follows. Destroys radicals which are normally produced within the cells and which are toxic to biological systems. The polypeptide is Superoxide dismutase [Cu-Zn] (Drosophila erecta (Fruit fly)).